The following is a 201-amino-acid chain: Large ribosomal subunit protein bL25 (201 aa).

Belongs to the bacterial ribosomal protein bL25 family. CTC subfamily. Part of the 50S ribosomal subunit; part of the 5S rRNA/L5/L18/L25 subcomplex. Contacts the 5S rRNA. Binds to the 5S rRNA independently of L5 and L18.

Its function is as follows. This is one of the proteins that binds to the 5S RNA in the ribosome where it forms part of the central protuberance. The polypeptide is Large ribosomal subunit protein bL25 (Burkholderia cenocepacia (strain HI2424)).